Here is a 285-residue protein sequence, read N- to C-terminus: Bifunctional protein FolD (285 aa).

NADP(+) is bound by residues 166–168, Ser-191, and Ile-232; that span reads GAS.

This sequence belongs to the tetrahydrofolate dehydrogenase/cyclohydrolase family. Homodimer.

The enzyme catalyses (6R)-5,10-methylene-5,6,7,8-tetrahydrofolate + NADP(+) = (6R)-5,10-methenyltetrahydrofolate + NADPH. It catalyses the reaction (6R)-5,10-methenyltetrahydrofolate + H2O = (6R)-10-formyltetrahydrofolate + H(+). It functions in the pathway one-carbon metabolism; tetrahydrofolate interconversion. In terms of biological role, catalyzes the oxidation of 5,10-methylenetetrahydrofolate to 5,10-methenyltetrahydrofolate and then the hydrolysis of 5,10-methenyltetrahydrofolate to 10-formyltetrahydrofolate. In Actinobacillus pleuropneumoniae serotype 7 (strain AP76), this protein is Bifunctional protein FolD.